A 404-amino-acid chain; its full sequence is Photosynthetic reaction center cytochrome c subunit (404 aa).

A signal peptide spans 1–22 (MSPAQQLTLPAVIVVASVMLLG). C23 is lipidated: N-palmitoyl cysteine. Residue C23 is the site of S-diacylglycerol cysteine attachment. Heme is bound by residues M94, C107, C110, H111, M130, H144, C152, C155, H156, M236, C247, C250, H251, C307, C310, and H311. Residues 346–404 (ASEAAPAAATEAAPEAPAQEVPAAEAVPAAAEPGAAEAAGSVEPAPVEEVAPAPAAQRL) form a disordered region.

Component of the photosynthetic reaction center composed of protein subunits L (PufL), M (PufM), H (PuhA) and cytochrome C (PufC). The reaction center interacts with light-harvesting antenna complex LH1. Binds 4 heme groups per subunit.

Its subcellular location is the cellular chromatophore membrane. Its function is as follows. The reaction center of purple bacteria contains a tightly bound cytochrome molecule which re-reduces the photo oxidized primary electron donor. The sequence is that of Photosynthetic reaction center cytochrome c subunit from Thermochromatium tepidum (Chromatium tepidum).